The chain runs to 153 residues: ATSNVFSMFDQSQIQEFKEAFTMIDANRDGFIDQEDLKDTYASLGRGIKDERIRDMLAESSGPVNFQIFLGLFGDKLSGTDPEETILEAFKILDADNKGVINKNYLAEIMMTQADRFSQSEVNQMFDISPIDVAGNLDYKSLCYIITHGQEEE.

EF-hand domains are found at residues 12–47 (SQIQEFKEAFTMIDANRDGFIDQEDLKDTYASLGRG), 81–116 (DPEETILEAFKILDADNKGVINKNYLAEIMMTQADR), and 117–152 (FSQSEVNQMFDISPIDVAGNLDYKSLCYIITHGQEE). Residues Asp25, Asn27, Asp29, and Asp36 each coordinate Ca(2+).

Its function is as follows. In molluscan muscle, calcium regulation is associated with myosin rather than with actin. Muscle myosin contains two types of light chains: the catalytic light chain, essential for ATPase activity, and the regulatory light chain, a calcium-binding protein responsible for Ca(2+) dependent binding and Ca(2+) dependent Mg-ATPase activity. This chain is Myosin regulatory light chain, smooth muscle, found in Halocynthia roretzi (Sea squirt).